The chain runs to 981 residues: Alpha-mannosidase (981 aa).

Residues His-23, Asp-25, and Asp-145 each coordinate Zn(2+). Residue Asp-145 is the Nucleophile of the active site. The N-linked (GlcNAc...) asparagine glycan is linked to Asn-312. A Zn(2+)-binding site is contributed by His-386. 3 disulfide bridges follow: Cys-422-Cys-432, Cys-442-Cys-450, and Cys-800-Cys-807. An N-linked (GlcNAc...) asparagine glycan is attached at Asn-446. The disordered stretch occupies residues 938-957 (KKMKWSVEGDNEQEPQAVRG).

It belongs to the glycosyl hydrolase 38 family. Dimer of dimers of heavy and light subunits. Requires Zn(2+) as cofactor. In terms of processing, produced as a precursor which is then proteolytically cleaved into a 66kD heavy subunit and a 44kD light subunit. Cleavage probably occurs in protein bodies/protein storage vacuoles.

It localises to the protein storage vacuole. The catalysed reaction is Hydrolysis of terminal, non-reducing alpha-D-mannose residues in alpha-D-mannosides.. Its activity is regulated as follows. Inhibited by 2,3,4,6-tetra-O-acetyl-5-fluoro-beta-L-gulopyranosyl fluoride which acts as a slow substrate, doubling as a competitive inhibitor as it forms a high steady state concentration of glycosyl-enzyme intermediate that blocks the active site. Inhibited by 2,3,4,6-tetra-O-acetyl-5-fluoro-alpha-D-mannopyranosyl fluoride which also acts as a slow substrate but no intermediates accumulate. Inhibited by EDTA. Inhibited by metal ion Cu(2+). Inhibited by metal ions Fe(2+), Cd(2+) and Co(2+). Inhibited by metal ions Ag(+) and Hg(2+). Competitively inhibited by mannono-1-4-lactone and mannono-1-5-lactone. Inhibited by swainsonine but not by 1-desoxymannojirimycin. Inhibited by pyrrolidine-3,4-diol derivatives. In terms of biological role, liberates mannose from p-nitrophenyl-alpha-D-mannoside. Liberates mannose from further alpha-D-mannosides including methyl-, benzyl-alpha-D-mannoside, 1-6-linked di-, tri- and tetrasaccharides of alpha-D-mannose and mannosyl-rhamnose. Liberates mannose from various glycoproteins like ovalbumin and ovomucoid. Does not hydrolyze beta-D-mannosides. Has glycosyltransferase activity, forming disaccharides from mannose and lyxose but not from glucose, galactose, ribose, xylose or arabinose. The sequence is that of Alpha-mannosidase from Canavalia ensiformis (Jack bean).